We begin with the raw amino-acid sequence, 94 residues long: Integration host factor subunit beta (94 aa).

Belongs to the bacterial histone-like protein family. Heterodimer of an alpha and a beta chain.

This protein is one of the two subunits of integration host factor, a specific DNA-binding protein that functions in genetic recombination as well as in transcriptional and translational control. This chain is Integration host factor subunit beta, found in Citrobacter koseri (strain ATCC BAA-895 / CDC 4225-83 / SGSC4696).